Consider the following 690-residue polypeptide: Eukaryotic translation initiation factor 3 subunit B (690 aa).

Residues 1–11 are compositionally biased toward basic and acidic residues; the sequence is MAKKKSEEHSS. The segment at 1-33 is disordered; sequence MAKKKSEEHSSADANDSDYQEEPNFDDPPNFVD. Residues 15–25 show a composition bias toward acidic residues; sequence NDSDYQEEPNF. The region spanning 57-141 is the RRM domain; the sequence is SVVVVDNIPK…HTFAVNLFTD (85 aa). WD repeat units lie at residues 207–246, 293–331, 334–369, 442–484, and 530–575; these read TRER…KIQK, DGMS…LLDL, IKIP…TLME, EIRE…KPSL, and PDHF…IKRT. The stretch at 614–645 forms a coiled coil; sequence QKDRLRLTRASKELLEKRSQLRETFMEYRNKR.

It belongs to the eIF-3 subunit B family. As to quaternary structure, component of the eukaryotic translation initiation factor 3 (eIF-3) complex. The eIF-3 complex interacts with pix. Interacts with mxt.

Its subcellular location is the cytoplasm. RNA-binding component of the eukaryotic translation initiation factor 3 (eIF-3) complex, which is involved in protein synthesis of a specialized repertoire of mRNAs and, together with other initiation factors, stimulates binding of mRNA and methionyl-tRNAi to the 40S ribosome. The eIF-3 complex specifically targets and initiates translation of a subset of mRNAs involved in cell proliferation. The chain is Eukaryotic translation initiation factor 3 subunit B from Drosophila willistoni (Fruit fly).